A 162-amino-acid chain; its full sequence is Caveolin-2 (162 aa).

Topologically, residues 1–86 are cytoplasmic; the sequence is MGLETEKADV…FEISKYVLYK (86 aa). Tyrosine 19 bears the Phosphotyrosine; by SRC mark. Serine 20 and serine 23 each carry phosphoserine. The segment at residues 87 to 107 is an intramembrane region (helical); it reads FLTVFLAIPLAFAAGVLFAVL. The Cytoplasmic segment spans residues 108 to 162; sequence SCLHIWILMPFVKTCLMVLPSVQTIWRSVTDVVIAPLCASIGRSFSSVGLQLSHD.

This sequence belongs to the caveolin family. Monomer or homodimer. Interacts with CAV1; the interaction forms a stable heterooligomeric complex that is required for targeting to lipid rafts and for caveolae formation. Tyrosine phosphorylated forms do not form heterooligomers with the Tyr-19-phosphorylated form existing as a monomer or dimer. Interacts (tyrosine phosphorylated form) with the SH2 domain-containing proteins, RASA1, NCK1 and SRC. Interacts (tyrosine phosphorylated form) with INSR. Interacts (Tyr-19 phosphorylated form) with MAPK1 (phosphorylated form); the interaction, promoted by insulin, leads to nuclear location and MAPK1 activation. Interacts with STAT3; the interaction is increased on insulin-induced tyrosine phosphorylation leading to STAT activation. Phosphorylated on serine and tyrosine residues. CAV1 promotes phosphorylation on Ser-23 which then targets the complex to the plasma membrane, lipid rafts and caveolae. Phosphorylation on Tyr-19 is required for insulin-induced phosphorylation of MAPK1 and DNA binding of STAT3. Tyrosine phosphorylation is induced by both EGF and insulin.

Its subcellular location is the nucleus. It is found in the cytoplasm. The protein resides in the golgi apparatus membrane. It localises to the cell membrane. The protein localises to the membrane. Its subcellular location is the caveola. May act as a scaffolding protein within caveolar membranes. Interacts directly with G-protein alpha subunits and can functionally regulate their activity. Acts as an accessory protein in conjunction with CAV1 in targeting to lipid rafts and driving caveolae formation. Positive regulator of cellular mitogenesis of the MAPK signaling pathway. Required for the insulin-stimulated nuclear translocation and activation of MAPK1 and STAT3, and the subsequent regulation of cell cycle progression. This Oryctolagus cuniculus (Rabbit) protein is Caveolin-2 (CAV2).